Reading from the N-terminus, the 2108-residue chain is General negative regulator of transcription subunit 1 (2108 aa).

Coiled coils occupy residues 795-813 (NVTLANLNNKVDELKKSLT) and 1021-1046 (MQQHQQQMLIYQQRQQQQQQRQQQQQ). The segment at 1323-1352 (QQQQLQKSRLNQPSQSAQPPGVNVPNPQGG) is disordered. The segment covering 1329–1339 (KSRLNQPSQSA) has biased composition (polar residues). The segment covering 1340-1352 (QPPGVNVPNPQGG) has biased composition (low complexity). A Phosphothreonine modification is found at Thr-2102.

The protein belongs to the CNOT1 family. As to quaternary structure, forms a NOT protein complex that comprises NOT1, NOT2, NOT3, NOT4 and NOT5. Subunit of the 1.0 MDa CCR4-NOT core complex that contains CCR4, CAF1, NOT1, NOT2, NOT3, NOT4, NOT5, CAF40 and CAF130. In the complex interacts with CCR4, POP2, NOT2, NOT4 and NOT5. The core complex probably is part of a less characterized 1.9 MDa CCR4-NOT complex.

Its subcellular location is the cytoplasm. The protein localises to the nucleus. In terms of biological role, acts as a component of the CCR4-NOT core complex, which in the nucleus seems to be a general transcription factor, and in the cytoplasm the major mRNA deadenylase involved in mRNA turnover. The NOT protein subcomplex negatively regulates the basal and activated transcription of many genes. Preferentially affects TC-type TATA element-dependent transcription. Could directly or indirectly inhibit component(s) of the general transcription machinery. The protein is General negative regulator of transcription subunit 1 (CDC39) of Saccharomyces cerevisiae (strain ATCC 204508 / S288c) (Baker's yeast).